The following is a 435-amino-acid chain: D-inositol 3-phosphate glycosyltransferase (435 aa).

Position 25 (His-25) interacts with 1D-myo-inositol 3-phosphate. Residues 31-32 (QP) and Gly-39 each bind UDP-N-acetyl-alpha-D-glucosamine. Residues 36-41 (DAGGMN), Lys-94, Tyr-127, Thr-151, and Arg-171 contribute to the 1D-myo-inositol 3-phosphate site. The UDP-N-acetyl-alpha-D-glucosamine site is built by Arg-245 and Lys-250. Residues Tyr-320, Arg-321, and Ala-323 each coordinate Mg(2+). Residues Glu-333 and Glu-341 each contribute to the UDP-N-acetyl-alpha-D-glucosamine site. Thr-347 contacts Mg(2+).

The protein belongs to the glycosyltransferase group 1 family. MshA subfamily. As to quaternary structure, homodimer.

It catalyses the reaction 1D-myo-inositol 3-phosphate + UDP-N-acetyl-alpha-D-glucosamine = 1D-myo-inositol 2-acetamido-2-deoxy-alpha-D-glucopyranoside 3-phosphate + UDP + H(+). Functionally, catalyzes the transfer of a N-acetyl-glucosamine moiety to 1D-myo-inositol 3-phosphate to produce 1D-myo-inositol 2-acetamido-2-deoxy-glucopyranoside 3-phosphate in the mycothiol biosynthesis pathway. This is D-inositol 3-phosphate glycosyltransferase from Streptosporangium roseum (strain ATCC 12428 / DSM 43021 / JCM 3005 / KCTC 9067 / NCIMB 10171 / NRRL 2505 / NI 9100).